We begin with the raw amino-acid sequence, 102 residues long: Small integral membrane protein 29 (102 aa).

The N-linked (GlcNAc...) asparagine glycan is linked to Asn3. Residues 21–41 form a helical membrane-spanning segment; that stretch reads VLGPFFLITLVGVVVAVVMYV.

As to expression, expressed in spleen, thymus, prostate, testis, uterus, small intestine, colon and peripheral blood leukocytes.

It is found in the membrane. This chain is Small integral membrane protein 29, found in Homo sapiens (Human).